We begin with the raw amino-acid sequence, 177 residues long: MLDAFSRVVVNSDAKAAYVGGSDLQALKKFIAGGNKRLDSVNAIVSNASCIVSDAVSGMICENPGLIAPGGNCYTNRRMAACLRDGEIILRYVSYALLAGDPSVLEDRCLNGLKETYIALGVPTNSSVRAVSIMKAAAVAFITNTASQRKMATADGDCSALASEVASYCDRVAAAIS.

Phycourobilin-binding residues include Cys-50 and Cys-61. Asn-72 is modified (N4-methylasparagine). Positions 82 and 158 each coordinate (2R,3E)-phycoerythrobilin.

Belongs to the phycobiliprotein family. As to quaternary structure, heterodimer of an alpha and a beta chain. In terms of processing, contains two covalently linked phycoerythrobilin chromophores and one covalently linked phycourobilin chromophore.

It localises to the plastid. The protein resides in the chloroplast thylakoid membrane. Light-harvesting photosynthetic bile pigment-protein from the phycobiliprotein complex. This Pyropia yezoensis (Susabi-nori) protein is R-phycoerythrin beta chain (cpeB).